The chain runs to 108 residues: MTPSRLPWLLSWVSATAWRAARSPLLCHSLRKTSSSQGGKSELVKQSLKKPKLPEGRFDAPEDSHLEKEPLEKFPDDVNPVTKEKGGPRGPEPTRYGDWERKGRCIDF.

A mitochondrion-targeting transit peptide spans 1–20; sequence MTPSRLPWLLSWVSATAWRA. A disordered region spans residues 31–108; the sequence is RKTSSSQGGK…WERKGRCIDF (78 aa). Basic and acidic residues-rich tracts occupy residues 52–87 and 95–108; these read KLPE…EKGG and RYGD…CIDF.

It belongs to the SDHAF4 family. As to quaternary structure, interacts with SDHA in its FAD-bound form.

It is found in the mitochondrion matrix. Its function is as follows. Plays an essential role in the assembly of succinate dehydrogenase (SDH), an enzyme complex (also referred to as respiratory complex II) that is a component of both the tricarboxylic acid (TCA) cycle and the mitochondrial electron transport chain, and which couples the oxidation of succinate to fumarate with the reduction of ubiquinone (coenzyme Q) to ubiquinol. Binds to the flavoprotein subunit SDHA in its FAD-bound form, blocking the generation of excess reactive oxygen species (ROS) and facilitating its assembly with the iron-sulfur protein subunit SDHB into the SDH catalytic dimer. In Homo sapiens (Human), this protein is Succinate dehydrogenase assembly factor 4, mitochondrial.